A 179-amino-acid polypeptide reads, in one-letter code: Large ribosomal subunit protein uL5 (179 aa).

This sequence belongs to the universal ribosomal protein uL5 family. Part of the 50S ribosomal subunit; part of the 5S rRNA/L5/L18/L25 subcomplex. Contacts the 5S rRNA and the P site tRNA. Forms a bridge to the 30S subunit in the 70S ribosome.

This is one of the proteins that bind and probably mediate the attachment of the 5S RNA into the large ribosomal subunit, where it forms part of the central protuberance. In the 70S ribosome it contacts protein S13 of the 30S subunit (bridge B1b), connecting the 2 subunits; this bridge is implicated in subunit movement. Contacts the P site tRNA; the 5S rRNA and some of its associated proteins might help stabilize positioning of ribosome-bound tRNAs. This is Large ribosomal subunit protein uL5 from Yersinia pestis.